The following is a 154-amino-acid chain: Leghemoglobin-2 (154 aa).

The region spanning 3-151 (ALTESQAALV…LAIVIKKEMN (149 aa)) is the Globin domain. S46 contributes to the heme b binding site. S46 carries the post-translational modification Phosphoserine. H64 contributes to the O2 binding site. The heme b site is built by K67, H98, and K101. Y139 carries the post-translational modification Nitrated tyrosine.

This sequence belongs to the plant globin family. Monomer. In terms of processing, nitrated in effective nodules and particularly in hypoxic conditions; this mechanism may play a protective role in the symbiosis by buffering toxic peroxynitrite NO(2)(-). Nitration level decrease during nodule senescence. Post-translationally, phosphorylation at Ser-46 disrupts the molecular environment of its porphyrin ring oxygen binding pocket, thus leading to a reduced oxygen consumption and to the delivery of oxygen O(2) to symbiosomes. In terms of tissue distribution, root nodules.

The protein localises to the cytoplasm. The protein resides in the cytosol. Its subcellular location is the nucleus. Functionally, leghemoglobin that reversibly binds oxygen O(2) through a pentacoordinated heme iron. In root nodules, facilitates the diffusion of oxygen to the bacteroids while preventing the bacterial nitrogenase from being inactivated by buffering dioxygen, nitric oxide and carbon monoxide, and promoting the formation of reactive oxygen species (ROS, e.g. H(2)O(2)). This role is essential for symbiotic nitrogen fixation (SNF). The polypeptide is Leghemoglobin-2 (Lupinus luteus (European yellow lupine)).